We begin with the raw amino-acid sequence, 638 residues long: Signal recognition particle receptor subunit alpha (638 aa).

2 disordered regions span residues 132-244 (APTT…GKKA) and 283-316 (GTGSGGQLQDLDCSSSDDEGAAQNSTKPSATKGT). Basic and acidic residues-rich tracts occupy residues 137-146 (KKFEDSEKAK) and 153-165 (IETRGEKPKEKAK). Position 177 is a phosphoserine (Ser-177). Residues 204–239 (LSKEELIRRKREEFIQKHGRGMEKSNKSTKSDAPKE) are compositionally biased toward basic and acidic residues. Residue Thr-284 is modified to Phosphothreonine. A phosphoserine mark is found at Ser-296, Ser-297, and Ser-298. Residues 304–314 (AQNSTKPSATK) show a composition bias toward polar residues. The NG domain stretch occupies residues 419 to 636 (YVVTFCGVNG…NAKAVVAALM (218 aa)). 425–432 (GVNGVGKS) is a binding site for GTP. Residue Ser-473 is modified to Phosphoserine. 520–524 (DTAGR) contacts GTP. Thr-578 is subject to Phosphothreonine. 588–591 (TKFD) contributes to the GTP binding site.

This sequence belongs to the GTP-binding SRP family. In terms of assembly, heterodimer with SRPRB. Interacts with the signal recognition particle (SRP) complex subunit SRP54. (Microbial infection) May interact with Zika virus strain Mr-766 non-structural protein 4A/NS4A. May interact with Zika virus French Polynesia 10087PF/2013 non-structural protein 4A/NS4A. As to quaternary structure, (Microbial infection) May interact with Dengue virus DENV2 16681 non-structural protein 4A/NS4A.

The protein localises to the endoplasmic reticulum membrane. Functionally, component of the signal recognition particle (SRP) complex receptor (SR). Ensures, in conjunction with the SRP complex, the correct targeting of the nascent secretory proteins to the endoplasmic reticulum membrane system. Forms a guanosine 5'-triphosphate (GTP)-dependent complex with the SRP subunit SRP54. SRP receptor compaction and GTPase rearrangement drive SRP-mediated cotranslational protein translocation into the ER. The sequence is that of Signal recognition particle receptor subunit alpha from Homo sapiens (Human).